We begin with the raw amino-acid sequence, 292 residues long: Tetrahydromethanopterin:alpha-L-glutamate ligase (292 aa).

The ATP-grasp domain maps to 103-286; that stretch reads SFLMEVHKIP…IAQNLIDEAL (184 aa). ATP is bound by residues Lys138, 176-188, and Arg204; that span reads QEFV…VYRD. Residues Asp247, Glu259, and Asn261 each contribute to the Mg(2+) site. Mn(2+)-binding residues include Asp247, Glu259, and Asn261.

The protein belongs to the RimK family. MptN subfamily. As to quaternary structure, homodimer. Mg(2+) is required as a cofactor. It depends on Mn(2+) as a cofactor.

It carries out the reaction 5,6,7,8-tetrahydromethanopterin + L-glutamate + ATP = 5,6,7,8-tetrahydrosarcinapterin + ADP + phosphate + H(+). It functions in the pathway cofactor biosynthesis; 5,6,7,8-tetrahydrosarcinapterin biosynthesis. Catalyzes the ATP or GTP-dependent addition of one L-glutamate molecule to tetrahydromethanopterin, producing tetrahydrosarcinapterin. The sequence is that of Tetrahydromethanopterin:alpha-L-glutamate ligase (mptN) from Methanococcus maripaludis (strain DSM 14266 / JCM 13030 / NBRC 101832 / S2 / LL).